A 175-amino-acid polypeptide reads, in one-letter code: Orotate phosphoribosyltransferase (175 aa).

5-phospho-alpha-D-ribose 1-diphosphate-binding positions include Arg-89, Lys-90, Lys-93, and Glu-115 to Ser-123. Orotate is bound by residues Thr-119 and Arg-147.

It belongs to the purine/pyrimidine phosphoribosyltransferase family. PyrE subfamily. Homodimer. Mg(2+) serves as cofactor.

The enzyme catalyses orotidine 5'-phosphate + diphosphate = orotate + 5-phospho-alpha-D-ribose 1-diphosphate. It participates in pyrimidine metabolism; UMP biosynthesis via de novo pathway; UMP from orotate: step 1/2. Catalyzes the transfer of a ribosyl phosphate group from 5-phosphoribose 1-diphosphate to orotate, leading to the formation of orotidine monophosphate (OMP). The polypeptide is Orotate phosphoribosyltransferase (Halobacterium salinarum (strain ATCC 700922 / JCM 11081 / NRC-1) (Halobacterium halobium)).